We begin with the raw amino-acid sequence, 266 residues long: MSKIKELFESGKFKSAFIPYFTLGDPNYNDSIEFGKTILDGGADILELGIPFSDPVADGPVIQRAVARSLKNKFSFDEIFRVTKQIHLHKQETPLVYLTYFNPIYHCGITKFLDNAKDSGVVGLVIPDLPFDTIESETLFQELRLRDMDLIHLVTPASTKKRIEALRKTSTGFIYYVTSFGVTGERREFSVDLKERIRFLKDTIQLPICAGFGISTPEQASQIAGYADGIIIGSAIQRVIEENGQDASKAKNVLADYITKIRASIS.

Active-site proton acceptor residues include E47 and D58.

This sequence belongs to the TrpA family. As to quaternary structure, tetramer of two alpha and two beta chains.

It carries out the reaction (1S,2R)-1-C-(indol-3-yl)glycerol 3-phosphate + L-serine = D-glyceraldehyde 3-phosphate + L-tryptophan + H2O. It functions in the pathway amino-acid biosynthesis; L-tryptophan biosynthesis; L-tryptophan from chorismate: step 5/5. The alpha subunit is responsible for the aldol cleavage of indoleglycerol phosphate to indole and glyceraldehyde 3-phosphate. The chain is Tryptophan synthase alpha chain from Leptospira biflexa serovar Patoc (strain Patoc 1 / Ames).